Reading from the N-terminus, the 196-residue chain is HTH-type transcriptional regulator EcpR (196 aa).

The HTH luxR-type domain maps to 138-196 (KDIKKDKITDREMEIIRMTAQGMQPKSIARIENCSVKTVYTHRRNAEAKLYSKIYKLVQ). The H-T-H motif DNA-binding region spans 162-181 (PKSIARIENCSVKTVYTHRR).

The protein belongs to the EcpR/MatA family.

Its subcellular location is the cytoplasm. Functionally, part of the ecpRABCDE operon, which encodes the E.coli common pilus (ECP). ECP is found in both commensal and pathogenic strains and plays a dual role in early-stage biofilm development and host cell recognition. Positively regulates the expression of the ecp operon. In Escherichia coli O139:H28 (strain E24377A / ETEC), this protein is HTH-type transcriptional regulator EcpR (ecpR).